The chain runs to 332 residues: L-lactate dehydrogenase A chain (332 aa).

Residues 29 to 57 and Arg99 each bind NAD(+); that span reads GAVGMACAISILMKDLADELALVDVVEDK. Substrate is bound by residues Arg106, Asn138, and Arg169. Asn138 provides a ligand contact to NAD(+). The active-site Proton acceptor is the His193. Thr248 contributes to the substrate binding site.

The protein belongs to the LDH/MDH superfamily. LDH family. As to quaternary structure, homotetramer.

The protein resides in the cytoplasm. It carries out the reaction (S)-lactate + NAD(+) = pyruvate + NADH + H(+). It participates in fermentation; pyruvate fermentation to lactate; (S)-lactate from pyruvate: step 1/1. In terms of biological role, interconverts simultaneously and stereospecifically pyruvate and lactate with concomitant interconversion of NADH and NAD(+). The protein is L-lactate dehydrogenase A chain (LDHA) of Python regius (Ball python).